Here is a 1368-residue protein sequence, read N- to C-terminus: DNA-directed RNA polymerase subunit beta (1368 aa).

The protein belongs to the RNA polymerase beta chain family. As to quaternary structure, the RNAP catalytic core consists of 2 alpha, 1 beta, 1 beta' and 1 omega subunit. When a sigma factor is associated with the core the holoenzyme is formed, which can initiate transcription.

It carries out the reaction RNA(n) + a ribonucleoside 5'-triphosphate = RNA(n+1) + diphosphate. DNA-dependent RNA polymerase catalyzes the transcription of DNA into RNA using the four ribonucleoside triphosphates as substrates. In Legionella pneumophila (strain Corby), this protein is DNA-directed RNA polymerase subunit beta.